Here is a 145-residue protein sequence, read N- to C-terminus: Flagellar assembly factor FliW (145 aa).

The protein belongs to the FliW family. Interacts with translational regulator CsrA and flagellin(s).

Its subcellular location is the cytoplasm. Its function is as follows. Acts as an anti-CsrA protein, binds CsrA and prevents it from repressing translation of its target genes, one of which is flagellin. Binds to flagellin and participates in the assembly of the flagellum. In Thermosipho africanus (strain TCF52B), this protein is Flagellar assembly factor FliW.